Here is a 107-residue protein sequence, read N- to C-terminus: Disintegrin lebestatin (107 aa).

A signal peptide spans 1-20; sequence MIQVLLVIICLAVFPFQGSS. A propeptide spanning residues 21–64 is cleaved from the precursor; the sequence is KTLKSGNVNDYEVVNPGTVTGLPKGAVEEKHEPMKGNTLQKFPL. Intrachain disulfides connect Cys-65–Cys-74, Cys-70–Cys-93, Cys-71–Cys-98, and Cys-83–Cys-100. The Disintegrin domain occupies 65–105; the sequence is CTTGPCCRQCKLKPAGTTCWKTSRTSHYCTGKSCDCPSYPG. The short motif at 85–87 is the Cell attachment site; atypical (KTS) element; the sequence is KTS. Positions 106–107 are excised as a propeptide; sequence NG.

As to quaternary structure, monomer. Expressed by the venom gland.

It localises to the secreted. In terms of biological role, specifically interacts with the alpha-1/beta-1 integrin (ITGA1/ITGB1). Exhibits highly inhibitory effects on cell adhesion and cell migration to collagens I and IV. Also shows in vivo anti-angiogenic activity. This is Disintegrin lebestatin from Macrovipera lebetinus (Levantine viper).